The following is a 119-amino-acid chain: Large ribosomal subunit protein uL18 (119 aa).

Belongs to the universal ribosomal protein uL18 family. In terms of assembly, part of the 50S ribosomal subunit; part of the 5S rRNA/L5/L18/L25 subcomplex. Contacts the 5S and 23S rRNAs.

This is one of the proteins that bind and probably mediate the attachment of the 5S RNA into the large ribosomal subunit, where it forms part of the central protuberance. The protein is Large ribosomal subunit protein uL18 of Oceanobacillus iheyensis (strain DSM 14371 / CIP 107618 / JCM 11309 / KCTC 3954 / HTE831).